The primary structure comprises 448 residues: Putative RNA-ligase (448 aa).

Belongs to the asfivirus M448R family.

It localises to the virion. The chain is Putative RNA-ligase from Ornithodoros (relapsing fever ticks).